The sequence spans 450 residues: Phosphoglucosamine mutase (450 aa).

The active-site Phosphoserine intermediate is the serine 101. Mg(2+) is bound by residues serine 101, aspartate 240, aspartate 242, and aspartate 244. Position 101 is a phosphoserine (serine 101).

It belongs to the phosphohexose mutase family. Requires Mg(2+) as cofactor. Post-translationally, activated by phosphorylation.

The enzyme catalyses alpha-D-glucosamine 1-phosphate = D-glucosamine 6-phosphate. In terms of biological role, catalyzes the conversion of glucosamine-6-phosphate to glucosamine-1-phosphate. The chain is Phosphoglucosamine mutase from Streptococcus equi subsp. zooepidemicus (strain H70).